The primary structure comprises 410 residues: 23S rRNA (uracil(747)-C(5))-methyltransferase (410 aa).

[4Fe-4S] cluster contacts are provided by C61, C67, C70, and C137. Residues Q253, Y279, E300, and D341 each coordinate S-adenosyl-L-methionine. C367 (nucleophile) is an active-site residue.

This sequence belongs to the class I-like SAM-binding methyltransferase superfamily. RNA M5U methyltransferase family.

The catalysed reaction is uridine(747) in 23S rRNA + S-adenosyl-L-methionine = 5-methyluridine(747) in 23S rRNA + S-adenosyl-L-homocysteine + H(+). Its activity is regulated as follows. Activated by magnesium ions. Functionally, catalyzes the formation of 5-methyl-uridine at position equivalent to 747 (m5U747) in 23S rRNA (m5U859 in the P.abyssi numbering). This chain is 23S rRNA (uracil(747)-C(5))-methyltransferase, found in Pyrococcus abyssi (strain GE5 / Orsay).